The following is a 264-amino-acid chain: Thiazole synthase (264 aa).

The active-site Schiff-base intermediate with DXP is the Lys101. Residues Gly162, 189 to 190, and 211 to 212 each bind 1-deoxy-D-xylulose 5-phosphate; these read AG and NT. A disordered region spans residues 245–264; that stretch reads KRQTASPSTPTLGQPFWHNQ.

The protein belongs to the ThiG family. As to quaternary structure, homotetramer. Forms heterodimers with either ThiH or ThiS.

It is found in the cytoplasm. The catalysed reaction is [ThiS sulfur-carrier protein]-C-terminal-Gly-aminoethanethioate + 2-iminoacetate + 1-deoxy-D-xylulose 5-phosphate = [ThiS sulfur-carrier protein]-C-terminal Gly-Gly + 2-[(2R,5Z)-2-carboxy-4-methylthiazol-5(2H)-ylidene]ethyl phosphate + 2 H2O + H(+). Its pathway is cofactor biosynthesis; thiamine diphosphate biosynthesis. Functionally, catalyzes the rearrangement of 1-deoxy-D-xylulose 5-phosphate (DXP) to produce the thiazole phosphate moiety of thiamine. Sulfur is provided by the thiocarboxylate moiety of the carrier protein ThiS. In vitro, sulfur can be provided by H(2)S. The chain is Thiazole synthase from Cellvibrio japonicus (strain Ueda107) (Pseudomonas fluorescens subsp. cellulosa).